Consider the following 444-residue polypeptide: Homogentisate 1,2-dioxygenase (444 aa).

H298 (proton acceptor) is an active-site residue. Residues H341 and E347 each contribute to the Fe cation site. Residues Y356 and H377 each coordinate homogentisate. H377 is a binding site for Fe cation.

It belongs to the homogentisate dioxygenase family. In terms of assembly, hexamer; dimer of trimers. Requires Fe cation as cofactor.

It carries out the reaction homogentisate + O2 = 4-maleylacetoacetate + H(+). It functions in the pathway amino-acid degradation; L-phenylalanine degradation; acetoacetate and fumarate from L-phenylalanine: step 4/6. In terms of biological role, involved in the catabolism of homogentisate (2,5-dihydroxyphenylacetate or 2,5-OH-PhAc), a central intermediate in the degradation of phenylalanine and tyrosine. Catalyzes the oxidative ring cleavage of the aromatic ring of homogentisate to yield maleylacetoacetate. This chain is Homogentisate 1,2-dioxygenase, found in Burkholderia ambifaria (strain ATCC BAA-244 / DSM 16087 / CCUG 44356 / LMG 19182 / AMMD) (Burkholderia cepacia (strain AMMD)).